The sequence spans 417 residues: Serine hydroxymethyltransferase (417 aa).

(6S)-5,6,7,8-tetrahydrofolate-binding positions include Leu-120 and 124 to 126 (GHL). N6-(pyridoxal phosphate)lysine is present on Lys-229.

Belongs to the SHMT family. In terms of assembly, homodimer. It depends on pyridoxal 5'-phosphate as a cofactor.

The protein localises to the cytoplasm. The catalysed reaction is (6R)-5,10-methylene-5,6,7,8-tetrahydrofolate + glycine + H2O = (6S)-5,6,7,8-tetrahydrofolate + L-serine. It functions in the pathway one-carbon metabolism; tetrahydrofolate interconversion. It participates in amino-acid biosynthesis; glycine biosynthesis; glycine from L-serine: step 1/1. In terms of biological role, catalyzes the reversible interconversion of serine and glycine with tetrahydrofolate (THF) serving as the one-carbon carrier. This reaction serves as the major source of one-carbon groups required for the biosynthesis of purines, thymidylate, methionine, and other important biomolecules. Also exhibits THF-independent aldolase activity toward beta-hydroxyamino acids, producing glycine and aldehydes, via a retro-aldol mechanism. The sequence is that of Serine hydroxymethyltransferase from Anaeromyxobacter dehalogenans (strain 2CP-1 / ATCC BAA-258).